The chain runs to 339 residues: Glycerol-3-phosphate dehydrogenase [NAD(P)+] (339 aa).

4 residues coordinate NADPH: Ser14, Tyr15, His35, and Lys109. 3 residues coordinate sn-glycerol 3-phosphate: Lys109, Gly138, and Thr140. Ala142 serves as a coordination point for NADPH. Sn-glycerol 3-phosphate is bound by residues Lys194, Asp247, Ser257, Arg258, and Asn259. The active-site Proton acceptor is the Lys194. Arg258 contributes to the NADPH binding site. NADPH-binding residues include Val282 and Glu284.

Belongs to the NAD-dependent glycerol-3-phosphate dehydrogenase family.

The protein localises to the cytoplasm. It catalyses the reaction sn-glycerol 3-phosphate + NAD(+) = dihydroxyacetone phosphate + NADH + H(+). It carries out the reaction sn-glycerol 3-phosphate + NADP(+) = dihydroxyacetone phosphate + NADPH + H(+). It functions in the pathway membrane lipid metabolism; glycerophospholipid metabolism. In terms of biological role, catalyzes the reduction of the glycolytic intermediate dihydroxyacetone phosphate (DHAP) to sn-glycerol 3-phosphate (G3P), the key precursor for phospholipid synthesis. The sequence is that of Glycerol-3-phosphate dehydrogenase [NAD(P)+] from Shewanella halifaxensis (strain HAW-EB4).